Consider the following 431-residue polypeptide: REST corepressor 1 (431 aa).

Positions 1-10 are enriched in basic and acidic residues; it reads MIEKGAEISG. Residues 1-53 are disordered; sequence MIEKGAEISGKRRGRNNAANSKSLGTNVNGSNSWEEGSSSSSSDDEPGGGGMR. Residues 17 to 28 are compositionally biased toward polar residues; that stretch reads NAANSKSLGTNV. Residues 29–42 are compositionally biased toward low complexity; it reads NGSNSWEEGSSSSS. The region spanning 50-135 is the ELM2 domain; it reads GGMRVGLQYQ…KSLADLLNFT (86 aa). Residues 136–187 form the SANT 1 domain; it reads PFPDEWTVEDRVLFEQAFSFHGKTFHRIQQMLPDKSIASLVKFYYSWKKTRS. The segment at 190 to 262 is disordered; it reads SVMDRHARKQ…NRAKRKPPNG (73 aa). Positions 224–242 are enriched in basic and acidic residues; the sequence is EQPKEAKKEVPKNDTVPHI. The stretch at 267 to 314 forms a coiled coil; the sequence is QEDVEAVSANANAATTVLRQLDMELVSIKRQIQNIKQTNSAFKEKLQG. One can recognise an SANT 2 domain in the interval 327 to 378; that stretch reads KFNARWTTEEQLLAVQAIRMYGRDFQAISDVIGNKSVVQVKNFFVNYRRRFN.

Belongs to the CoREST family. Component of a BHC histone deacetylase complex that contains KDM1A. In terms of tissue distribution, expressed in territories in which neurogenesis takes place.

Its subcellular location is the nucleus. Essential component of the BHC complex, a corepressor complex that represses transcription of neuron-specific genes in non-neuronal cells. The BHC complex is recruited at RE1/NRSE sites by REST and acts by deacetylating and demethylating specific sites on histones, thereby acting as a chromatin modifier. In the BHC complex, it serves as a molecular beacon for the recruitment of molecular machinery that imposes silencing across a chromosomal interval. Plays a central role in demethylation of Lys-4 of histone H3 by promoting demethylase activity of KDM1A on core histones and nucleosomal substrates. In Xenopus laevis (African clawed frog), this protein is REST corepressor 1 (rcor1).